The sequence spans 380 residues: Cytochrome b (380 aa).

4 consecutive transmembrane segments (helical) span residues 33-53 (FGSL…FLAM), 77-98 (WLIR…YLHI), 113-133 (WTIG…GYVL), and 178-198 (FFAF…IHLL). Histidine 83 and histidine 97 together coordinate heme b. Heme b contacts are provided by histidine 182 and histidine 196. Residue histidine 201 coordinates a ubiquinone. 4 consecutive transmembrane segments (helical) span residues 226-246 (YKDL…ALFS), 288-308 (LGGV…PFLH), 320-340 (VTQF…WIGG), and 347-367 (FVII…VLIP).

Belongs to the cytochrome b family. The cytochrome bc1 complex contains 3 respiratory subunits (MT-CYB, CYC1 and UQCRFS1), 2 core proteins (UQCRC1 and UQCRC2) and probably 6 low-molecular weight proteins. The cofactor is heme b.

It localises to the mitochondrion inner membrane. Component of the ubiquinol-cytochrome c reductase complex (complex III or cytochrome b-c1 complex) that is part of the mitochondrial respiratory chain. The b-c1 complex mediates electron transfer from ubiquinol to cytochrome c. Contributes to the generation of a proton gradient across the mitochondrial membrane that is then used for ATP synthesis. The chain is Cytochrome b (mt-cyb) from Kareius bicoloratus (Stone flounder).